A 93-amino-acid chain; its full sequence is UPF0213 protein CPE1444 (93 aa).

A GIY-YIG domain is found at M1–Q75.

It belongs to the UPF0213 family.

The protein is UPF0213 protein CPE1444 of Clostridium perfringens (strain 13 / Type A).